The following is a 610-amino-acid chain: UvrABC system protein C (610 aa).

A GIY-YIG domain is found at 16–94 (SQPGVYRMYD…IKLYQPRYNV (79 aa)). One can recognise a UVR domain in the interval 204–239 (DQVLTQLIARMEKASQNLEFEEAARIRDQIQAVRRV).

Belongs to the UvrC family. In terms of assembly, interacts with UvrB in an incision complex.

The protein resides in the cytoplasm. Its function is as follows. The UvrABC repair system catalyzes the recognition and processing of DNA lesions. UvrC both incises the 5' and 3' sides of the lesion. The N-terminal half is responsible for the 3' incision and the C-terminal half is responsible for the 5' incision. In Escherichia fergusonii (strain ATCC 35469 / DSM 13698 / CCUG 18766 / IAM 14443 / JCM 21226 / LMG 7866 / NBRC 102419 / NCTC 12128 / CDC 0568-73), this protein is UvrABC system protein C.